The following is a 362-amino-acid chain: Phosphoserine aminotransferase (362 aa).

Ser9 and Arg42 together coordinate L-glutamate. Residues 76 to 77 (GR), Trp102, Thr153, Asp174, and Gln197 contribute to the pyridoxal 5'-phosphate site. Lys198 carries the N6-(pyridoxal phosphate)lysine modification. Residue 239–240 (NT) coordinates pyridoxal 5'-phosphate.

Belongs to the class-V pyridoxal-phosphate-dependent aminotransferase family. SerC subfamily. Homodimer. It depends on pyridoxal 5'-phosphate as a cofactor.

Its subcellular location is the cytoplasm. The enzyme catalyses O-phospho-L-serine + 2-oxoglutarate = 3-phosphooxypyruvate + L-glutamate. It catalyses the reaction 4-(phosphooxy)-L-threonine + 2-oxoglutarate = (R)-3-hydroxy-2-oxo-4-phosphooxybutanoate + L-glutamate. It functions in the pathway amino-acid biosynthesis; L-serine biosynthesis; L-serine from 3-phospho-D-glycerate: step 2/3. It participates in cofactor biosynthesis; pyridoxine 5'-phosphate biosynthesis; pyridoxine 5'-phosphate from D-erythrose 4-phosphate: step 3/5. Catalyzes the reversible conversion of 3-phosphohydroxypyruvate to phosphoserine and of 3-hydroxy-2-oxo-4-phosphonooxybutanoate to phosphohydroxythreonine. The protein is Phosphoserine aminotransferase of Escherichia coli O127:H6 (strain E2348/69 / EPEC).